Here is a 245-residue protein sequence, read N- to C-terminus: UPF0319 protein VV0984 (245 aa).

A signal peptide spans 1 to 20; sequence MRYIGKWMMLGALVSSSVFA.

Belongs to the UPF0319 family.

The protein is UPF0319 protein VV0984 of Vibrio vulnificus (strain YJ016).